Reading from the N-terminus, the 344-residue chain is UDP-3-O-acylglucosamine N-acyltransferase (344 aa).

Histidine 250 functions as the Proton acceptor in the catalytic mechanism.

Belongs to the transferase hexapeptide repeat family. LpxD subfamily. As to quaternary structure, homotrimer.

The catalysed reaction is a UDP-3-O-[(3R)-3-hydroxyacyl]-alpha-D-glucosamine + a (3R)-hydroxyacyl-[ACP] = a UDP-2-N,3-O-bis[(3R)-3-hydroxyacyl]-alpha-D-glucosamine + holo-[ACP] + H(+). Its pathway is bacterial outer membrane biogenesis; LPS lipid A biosynthesis. Its function is as follows. Catalyzes the N-acylation of UDP-3-O-acylglucosamine using 3-hydroxyacyl-ACP as the acyl donor. Is involved in the biosynthesis of lipid A, a phosphorylated glycolipid that anchors the lipopolysaccharide to the outer membrane of the cell. This chain is UDP-3-O-acylglucosamine N-acyltransferase, found in Maricaulis maris (strain MCS10) (Caulobacter maris).